The chain runs to 423 residues: Deferrochelatase (423 aa).

The segment at residues 1–35 (MQYKDENGVNEPSRRRLLKVIGALALAGSCPVAHA) is a signal peptide (tat-type signal). Residue 236-238 (GTA) coordinates heme b. Protoporphyrin IX is bound by residues 236–238 (GTA) and Arg296. Residues His329, 334 to 336 (NPR), and Arg347 contribute to the heme b site.

Homodimer. Part of a ferrous iron transporter composed of EfeU, EfeO and EfeB. However, this EfeUOB tripartite iron transporter is defective in E.coli strain K12 due to a frameshift mutation in EfeU. The cofactor is heme b. Exported by the Tat system. The position of the signal peptide cleavage has been experimentally proven. Can also be exported by the Sec system.

It is found in the periplasm. It catalyses the reaction heme b + 2 H(+) = protoporphyrin IX + Fe(2+). Involved in the recovery of exogenous heme iron. Extracts iron from heme while preserving the protoporphyrin ring intact. Also displays peroxidase activity on guaiacol in vitro. The chain is Deferrochelatase (efeB) from Escherichia coli (strain K12).